The primary structure comprises 233 residues: Small ribosomal subunit protein uS2c (233 aa).

Belongs to the universal ribosomal protein uS2 family.

It localises to the plastid. It is found in the apicoplast. The chain is Small ribosomal subunit protein uS2c from Toxoplasma gondii.